Reading from the N-terminus, the 463-residue chain is L-seryl-tRNA(Sec) selenium transferase (463 aa).

The residue at position 295 (lysine 295) is an N6-(pyridoxal phosphate)lysine.

It belongs to the SelA family. In terms of assembly, homodecamer; pentamer of dimers. Binds only one seryl-tRNA(Sec) per dimer. Pyridoxal 5'-phosphate is required as a cofactor.

Its subcellular location is the cytoplasm. It catalyses the reaction L-seryl-tRNA(Sec) + selenophosphate + H(+) = L-selenocysteinyl-tRNA(Sec) + phosphate. The protein operates within aminoacyl-tRNA biosynthesis; selenocysteinyl-tRNA(Sec) biosynthesis; selenocysteinyl-tRNA(Sec) from L-seryl-tRNA(Sec) (bacterial route): step 1/1. In terms of biological role, converts seryl-tRNA(Sec) to selenocysteinyl-tRNA(Sec) required for selenoprotein biosynthesis. This chain is L-seryl-tRNA(Sec) selenium transferase, found in Proteus mirabilis (strain HI4320).